Here is a 123-residue protein sequence, read N- to C-terminus: Integration host factor subunit alpha (123 aa).

The interval 97–123 is disordered; that stretch reads NANGTASSMSSSANAAAGDKSESASGT. Over residues 102-113 the composition is skewed to low complexity; sequence ASSMSSSANAAA.

This sequence belongs to the bacterial histone-like protein family. Heterodimer of an alpha and a beta chain.

Functionally, this protein is one of the two subunits of integration host factor, a specific DNA-binding protein that functions in genetic recombination as well as in transcriptional and translational control. This chain is Integration host factor subunit alpha, found in Rhodopseudomonas palustris (strain HaA2).